The sequence spans 221 residues: PKHD-type hydroxylase PMT_0286 (221 aa).

The Fe2OG dioxygenase domain occupies 80–174 (HIHGVMFSRS…RLVCVGWIQS (95 aa)). The Fe cation site is built by His98, Asp100, and His155. 2-oxoglutarate is bound at residue Arg165.

It depends on Fe(2+) as a cofactor. The cofactor is L-ascorbate.

In Prochlorococcus marinus (strain MIT 9313), this protein is PKHD-type hydroxylase PMT_0286.